The following is a 207-amino-acid chain: MSHGPLRVGIGGPVGAGKTTLTEKLCAALAHRCSMAVITNDIYTREDAEALMRAQVLPAERIRGVETGGCPHTAIREDASINLAAVADLRRTFPDLDLILIESGGDNLAATFSPELADLTIYVIDTAAGQDIPRKRGPGLARSDLLVVNKTDLAPHVGVDLARLEADTQAARGQRPYVMARMRAGVGVEAIVAFLEREGGLQLLPQD.

Residue 12–19 (GPVGAGKT) participates in GTP binding.

This sequence belongs to the SIMIBI class G3E GTPase family. UreG subfamily. Homodimer. UreD, UreF and UreG form a complex that acts as a GTP-hydrolysis-dependent molecular chaperone, activating the urease apoprotein by helping to assemble the nickel containing metallocenter of UreC. The UreE protein probably delivers the nickel.

The protein localises to the cytoplasm. In terms of biological role, facilitates the functional incorporation of the urease nickel metallocenter. This process requires GTP hydrolysis, probably effectuated by UreG. The chain is Urease accessory protein UreG from Cereibacter sphaeroides (strain ATCC 17029 / ATH 2.4.9) (Rhodobacter sphaeroides).